The sequence spans 413 residues: Corticotropin-releasing factor receptor 2 (413 aa).

The not cleaved signal peptide spans 1 to 22 (MDSTIFEIIIDEFDANCSLLDA). Residues 1–110 (MDSTIFEIII…CVPILDNKRK (110 aa)) lie on the Extracellular side of the membrane. An N-linked (GlcNAc...) asparagine glycan is attached at Asn-16. Disulfide bonds link Cys-17/Cys-53, Cys-43/Cys-86, and Cys-67/Cys-101. Residues Asn-77, Asn-89, and Asn-97 are each glycosylated (N-linked (GlcNAc...) asparagine). The chain crosses the membrane as a helical span at residues 111–141 (YALHYKIALIINYLGHCISILALVIAFLLFL). The Cytoplasmic portion of the chain corresponds to 142–148 (CLRSIRC). A helical transmembrane segment spans residues 149–173 (LRNIIHWNLITTFILRNIMWFLLQM). At 174–187 (IDHNIHESNEVWCR) the chain is on the extracellular side. Residues Cys-186 and Cys-256 are joined by a disulfide bond. The chain crosses the membrane as a helical span at residues 188–216 (CITTIYNYFVVTNFFWMFVEGCYLHTAIV). At 217–223 (MTYSTDK) the chain is on the cytoplasmic side. A helical transmembrane segment spans residues 224–251 (LRKWVFLFIGWCIPSPIIVTWAICKLFY). At 252–267 (ENEQCWIGKEPGKYID) the chain is on the extracellular side. A helical transmembrane segment spans residues 268–293 (YIYQGRVILVLLINFVFLFNIVRILM). Residues 294–304 (TKLRASTTSET) lie on the Cytoplasmic side of the membrane. The chain crosses the membrane as a helical span at residues 305–329 (IQYRKAVKATLVLLPLLGITYMLFF). At 330–336 (VNPGEDD) the chain is on the extracellular side. A helical transmembrane segment spans residues 337 to 366 (VSQIVFIYFNSFLQSFQGFFVSVFYCFLNG). The Cytoplasmic segment spans residues 367-413 (EVRSAARKRWHRWQDHHSLRVRVARAMSIPTSPTRISFHSIKQTAAV).

This sequence belongs to the G-protein coupled receptor 2 family. Post-translationally, a N-glycosylation site within the signal peptide impedes its proper cleavage and function.

The protein localises to the cell membrane. In terms of biological role, G-protein coupled receptor for CRH (corticotropin-releasing factor), UCN (urocortin), UCN2 and UCN3. Has high affinity for UCN. Ligand binding causes a conformation change that triggers signaling via guanine nucleotide-binding proteins (G proteins) and down-stream effectors, such as adenylate cyclase. Promotes the activation of adenylate cyclase, leading to increased intracellular cAMP levels. The chain is Corticotropin-releasing factor receptor 2 (crhr2) from Xenopus laevis (African clawed frog).